Consider the following 308-residue polypeptide: ATP synthase gamma chain (308 aa).

The protein belongs to the ATPase gamma chain family. As to quaternary structure, F-type ATPases have 2 components, CF(1) - the catalytic core - and CF(0) - the membrane proton channel. CF(1) has five subunits: alpha(3), beta(3), gamma(1), delta(1), epsilon(1). CF(0) has three main subunits: a, b and c.

The protein localises to the cell membrane. In terms of biological role, produces ATP from ADP in the presence of a proton gradient across the membrane. The gamma chain is believed to be important in regulating ATPase activity and the flow of protons through the CF(0) complex. The polypeptide is ATP synthase gamma chain (Lacticaseibacillus paracasei (strain ATCC 334 / BCRC 17002 / CCUG 31169 / CIP 107868 / KCTC 3260 / NRRL B-441) (Lactobacillus paracasei)).